The following is a 105-amino-acid chain: Large ribosomal subunit protein uL24 (105 aa).

This sequence belongs to the universal ribosomal protein uL24 family. In terms of assembly, part of the 50S ribosomal subunit.

Its function is as follows. One of two assembly initiator proteins, it binds directly to the 5'-end of the 23S rRNA, where it nucleates assembly of the 50S subunit. One of the proteins that surrounds the polypeptide exit tunnel on the outside of the subunit. The sequence is that of Large ribosomal subunit protein uL24 from Methylocella silvestris (strain DSM 15510 / CIP 108128 / LMG 27833 / NCIMB 13906 / BL2).